Reading from the N-terminus, the 644-residue chain is CTP synthase (644 aa).

The Glutamine amidotransferase type-1 domain occupies 300–551 (SIAIVGKYTK…LGLILASVDR (252 aa)). Residues Cys-399, His-527, and Glu-529 each act as for GATase activity in the active site.

Belongs to the CTP synthase family.

It catalyses the reaction UTP + L-glutamine + ATP + H2O = CTP + L-glutamate + ADP + phosphate + 2 H(+). The protein operates within pyrimidine metabolism; CTP biosynthesis via de novo pathway; CTP from UDP: step 2/2. Its function is as follows. Catalyzes the ATP-dependent amination of UTP to CTP with either L-glutamine or ammonia as the source of nitrogen. Constitutes the rate-limiting enzyme in the synthesis of cytosine nucleotides. The polypeptide is CTP synthase (Drosophila pseudoobscura pseudoobscura (Fruit fly)).